We begin with the raw amino-acid sequence, 244 residues long: Ribonuclease 3 (244 aa).

In terms of domain architecture, RNase III spans 21-148 (DHAPLLEAWG…MLGAIYLHHG (128 aa)). Glu61 serves as a coordination point for Mg(2+). Asp65 is a catalytic residue. Residues Asp134 and Glu137 each contribute to the Mg(2+) site. Glu137 is a catalytic residue. Positions 175–242 (DWKTVLLEKL…AKQAVQKLNE (68 aa)) constitute a DRBM domain.

Belongs to the ribonuclease III family. Homodimer. It depends on Mg(2+) as a cofactor.

It is found in the cytoplasm. It carries out the reaction Endonucleolytic cleavage to 5'-phosphomonoester.. In terms of biological role, digests double-stranded RNA. Involved in the processing of primary rRNA transcript to yield the immediate precursors to the large and small rRNAs (23S and 16S). Processes some mRNAs, and tRNAs when they are encoded in the rRNA operon. Processes pre-crRNA and tracrRNA of type II CRISPR loci if present in the organism. This is Ribonuclease 3 from Corynebacterium jeikeium (strain K411).